A 135-amino-acid polypeptide reads, in one-letter code: ATP synthase epsilon chain (135 aa).

Belongs to the ATPase epsilon chain family. F-type ATPases have 2 components, CF(1) - the catalytic core - and CF(0) - the membrane proton channel. CF(1) has five subunits: alpha(3), beta(3), gamma(1), delta(1), epsilon(1). CF(0) has three main subunits: a, b and c.

Its subcellular location is the cell inner membrane. Produces ATP from ADP in the presence of a proton gradient across the membrane. This is ATP synthase epsilon chain from Desulforapulum autotrophicum (strain ATCC 43914 / DSM 3382 / VKM B-1955 / HRM2) (Desulfobacterium autotrophicum).